Here is a 422-residue protein sequence, read N- to C-terminus: uncharacterized protein (422 aa).

12 helical membrane-spanning segments follow: residues 23 to 43 (IVKI…LIYD), 47 to 67 (AIGT…LAPV), 90 to 110 (AIVL…WFVM), 112 to 132 (LMIV…ALIP), 151 to 171 (AQIV…FISP), 172 to 192 (SYTM…VLFI), 228 to 248 (ILYP…PWEA), 263 to 283 (IVYS…GFVL), 291 to 308 (YGLL…AFFI), 318 to 340 (VFFA…YTII), 352 to 372 (VYAV…VICG), and 381 to 401 (GKVI…ILLF).

It belongs to the major facilitator superfamily.

The protein resides in the cell membrane. This is an uncharacterized protein from Bacillus subtilis (strain 168).